The chain runs to 83 residues: Glutaredoxin 3 (83 aa).

Residues 2–83 form the Glutaredoxin domain; that stretch reads ANVEIYTKET…ARGGLDPLLK (82 aa). C12 and C15 are disulfide-bonded.

Belongs to the glutaredoxin family. As to quaternary structure, monomer.

The disulfide bond functions as an electron carrier in the glutathione-dependent synthesis of deoxyribonucleotides by the enzyme ribonucleotide reductase. In addition, it is also involved in reducing some disulfides in a coupled system with glutathione reductase. This chain is Glutaredoxin 3 (grxC), found in Escherichia coli O157:H7.